We begin with the raw amino-acid sequence, 225 residues long: MAEKEEGVKLIGSWASPFSRRVEMALKLKGVPYDYLDEDYLVVKSPLLLQLNPVYKKVPVLVHNGKILPESQLILEYIDQTWTNNPILPQSPYDKAMARFWAKFVDEQVTMIGLRSLVKSEKRIDVAIEEVQELIMLLENQITGKKLFGGETIGFLDMVVGSMIPFCLARAWEGMGIDMIPEEKFPELNRWIKNLKEIEIVRECIPDREKHIEHMMKIVGRIKAV.

The region spanning 6–86 (EGVKLIGSWA…YIDQTWTNNP (81 aa)) is the GST N-terminal domain. Glutathione-binding positions include 16-17 (SP), 43-44 (VK), 57-58 (KV), and 70-71 (ES). In terms of domain architecture, GST C-terminal spans 91 to 218 (SPYDKAMARF…EKHIEHMMKI (128 aa)). Phosphothreonine is present on Thr-152.

The protein belongs to the GST superfamily. Tau family.

It localises to the cytoplasm. The protein localises to the cytosol. The catalysed reaction is RX + glutathione = an S-substituted glutathione + a halide anion + H(+). Its function is as follows. May be involved in the conjugation of reduced glutathione to a wide number of exogenous and endogenous hydrophobic electrophiles and have a detoxification role against certain herbicides. This is Glutathione S-transferase U3 (GSTU3) from Arabidopsis thaliana (Mouse-ear cress).